The sequence spans 533 residues: Protein translocase subunit SecD (533 aa).

The next 6 membrane-spanning stretches (helical) occupy residues 8-28, 377-397, 400-420, 422-442, 469-489, and 495-515; these read ALLVVVVLIVGVVYLVPTFVS, IVGGIGTILFMLIYYRFGGVV, LALALNVLLVLAGMAAFGFTL, LPGIAGIALTIGMAVDANVLI, LTILDANVTTIIAALVLLQFG, and GFAVTLTVGLAANMFTAIFVT.

The protein belongs to the SecD/SecF family. SecD subfamily. Forms a complex with SecF. Part of the essential Sec protein translocation apparatus which comprises SecA, SecYEG and auxiliary proteins SecDF-YajC and YidC.

It localises to the cell inner membrane. Part of the Sec protein translocase complex. Interacts with the SecYEG preprotein conducting channel. SecDF uses the proton motive force (PMF) to complete protein translocation after the ATP-dependent function of SecA. The chain is Protein translocase subunit SecD from Syntrophobacter fumaroxidans (strain DSM 10017 / MPOB).